The sequence spans 291 residues: Signal peptidase I (291 aa).

Topologically, residues 1-45 (MTMKKLTSTTTTLWDNKLFINNLKNFMQTNTESNNNKTTAQEWKS) are cytoplasmic. Residues 46–66 (FILVVVIALMIRILIIESFVV) traverse the membrane as a helical segment. Residues 67–291 (PTGSMKATIL…IFRNLYSIED (225 aa)) are Periplasmic-facing. Active-site residues include S70 and K133.

This sequence belongs to the peptidase S26 family.

The protein resides in the cell inner membrane. It catalyses the reaction Cleavage of hydrophobic, N-terminal signal or leader sequences from secreted and periplasmic proteins.. The protein is Signal peptidase I (lepB) of Rickettsia bellii (strain RML369-C).